The primary structure comprises 260 residues: Acyl-[acyl-carrier-protein]--UDP-N-acetylglucosamine O-acyltransferase (260 aa).

The protein belongs to the transferase hexapeptide repeat family. LpxA subfamily. Homotrimer.

It localises to the cytoplasm. It carries out the reaction a (3R)-hydroxyacyl-[ACP] + UDP-N-acetyl-alpha-D-glucosamine = a UDP-3-O-[(3R)-3-hydroxyacyl]-N-acetyl-alpha-D-glucosamine + holo-[ACP]. It participates in glycolipid biosynthesis; lipid IV(A) biosynthesis; lipid IV(A) from (3R)-3-hydroxytetradecanoyl-[acyl-carrier-protein] and UDP-N-acetyl-alpha-D-glucosamine: step 1/6. In terms of biological role, involved in the biosynthesis of lipid A, a phosphorylated glycolipid that anchors the lipopolysaccharide to the outer membrane of the cell. The chain is Acyl-[acyl-carrier-protein]--UDP-N-acetylglucosamine O-acyltransferase from Sulfurovum sp. (strain NBC37-1).